A 406-amino-acid polypeptide reads, in one-letter code: Leu/Ile/Val-binding protein homolog 5 (406 aa).

An N-terminal signal peptide occupies residues 1 to 29 (MIGTRLPAWTRVLACGVAGLSLMTISAKA).

The protein belongs to the leucine-binding protein family.

Its function is as follows. Component of an amino-acid transport system. The chain is Leu/Ile/Val-binding protein homolog 5 from Brucella abortus (strain 2308).